A 1812-amino-acid chain; its full sequence is Putative surface cell antigen sca2 (1812 aa).

Residues 1-17 form the signal peptide; it reads MSTCLLTSSFLSTSARA. Composition is skewed to polar residues over residues 344-357 and 371-382; these read FLNN…STGR and MSNQSIHNTGTS. Disordered stretches follow at residues 344–382, 648–691, and 1338–1462; these read FLNN…TGTS, LEQT…QGFS, and KQEN…KKDV. Residues 656 to 685 are compositionally biased toward pro residues; sequence PNPPPLPLNGGIPNPPPLPLNGSMPPPPPL. 2 stretches are compositionally biased toward basic and acidic residues: residues 1349-1367 and 1382-1393; these read STKD…EQSD and SKNDKSSDDKKS. The span at 1401-1416 shows a compositional bias: acidic residues; it reads DEDDTGYATDEEELEE. The segment covering 1417–1455 has biased composition (low complexity); the sequence is SNSTTNEELEESNSTTNEELEESNSTTNEELEESNSTTN. The 280-residue stretch at 1533–1812 folds into the Autotransporter domain; sequence ETSINRGVWI…QGLIKLKVNL (280 aa).

It is found in the cell outer membrane. This is Putative surface cell antigen sca2 (sca2) from Rickettsia sibirica (strain ATCC VR-151 / 246).